An 885-amino-acid polypeptide reads, in one-letter code: Disease resistance protein RFL1 (885 aa).

Residues 27–61 (SYIQNLSENLASLQKAMGVLNAKRDDVQGRINREE) adopt a coiled-coil conformation. An NB-ARC domain is found at 141 to 443 (EAAPIAEVEE…CEGFIKEKQG (303 aa)). Position 183 to 190 (183 to 190 (GMGGVGKT)) interacts with ATP. LRR repeat units lie at residues 517–538 (AVKRMSLMNNNFEKILGSPECV), 539–561 (ELITLFLQNNYKLVDISMEFFRC), 564–586 (SLAVLDLSENHSLSELPEEISEL), 588–610 (SLQYLDLSGTYIERLPHGLHELR), 611–633 (KLVHLKLERTRRLESISGISYLS), 634–655 (SLRTLRLRDSKTTLDTGLMKEL), and 657–679 (LLEHLELITTDISSGLVGELFCY).

It belongs to the disease resistance NB-LRR family.

In terms of biological role, disease resistance (R) protein. The chain is Disease resistance protein RFL1 (RFL1) from Arabidopsis thaliana (Mouse-ear cress).